Here is a 211-residue protein sequence, read N- to C-terminus: Protein-methionine-sulfoxide reductase heme-binding subunit MsrQ (211 aa).

The next 5 helical transmembrane spans lie at 17–37 (LAGL…GLGA), 54–74 (FLLA…PLLI), 82–102 (LWCF…ELGV), 116–136 (PYLT…FTST), and 153–173 (FVYL…KIIS).

It belongs to the MsrQ family. As to quaternary structure, heterodimer of a catalytic subunit (MsrP) and a heme-binding subunit (MsrQ). FMN serves as cofactor. The cofactor is heme b.

The protein resides in the cell inner membrane. Part of the MsrPQ system that repairs oxidized periplasmic proteins containing methionine sulfoxide residues (Met-O), using respiratory chain electrons. Thus protects these proteins from oxidative-stress damage caused by reactive species of oxygen and chlorine generated by the host defense mechanisms. MsrPQ is essential for the maintenance of envelope integrity under bleach stress, rescuing a wide series of structurally unrelated periplasmic proteins from methionine oxidation, including the primary periplasmic chaperone SurA and the lipoprotein Pal. MsrQ provides electrons for reduction to the reductase catalytic subunit MsrP, using the quinone pool of the respiratory chain. The chain is Protein-methionine-sulfoxide reductase heme-binding subunit MsrQ from Escherichia coli (strain SMS-3-5 / SECEC).